Consider the following 222-residue polypeptide: Chorionic somatomammotropin hormone-like 1 (222 aa).

An N-terminal signal peptide occupies residues 1-26; sequence MAAGSRTSLLLAFALLCLPWLQEAGA. Positions 44 and 205 each coordinate Zn(2+). Cys-213 and Cys-220 are joined by a disulfide.

Belongs to the somatotropin/prolactin family.

Its subcellular location is the secreted. May be a novel gestational hormone required to compensate for absence of other members of the GH/CS cluster during gestation. The sequence is that of Chorionic somatomammotropin hormone-like 1 (CSHL1) from Homo sapiens (Human).